Here is a 959-residue protein sequence, read N- to C-terminus: DNA-directed RNA polymerase subunit beta'' (959 aa).

The Zn(2+) site is built by Cys-211, Cys-288, Cys-295, and Cys-298.

It belongs to the RNA polymerase beta' chain family. RpoC2 subfamily. As to quaternary structure, in plastids the minimal PEP RNA polymerase catalytic core is composed of four subunits: alpha, beta, beta', and beta''. When a (nuclear-encoded) sigma factor is associated with the core the holoenzyme is formed, which can initiate transcription. Requires Zn(2+) as cofactor.

It localises to the plastid. The protein resides in the apicoplast. It catalyses the reaction RNA(n) + a ribonucleoside 5'-triphosphate = RNA(n+1) + diphosphate. DNA-dependent RNA polymerase catalyzes the transcription of DNA into RNA using the four ribonucleoside triphosphates as substrates. The chain is DNA-directed RNA polymerase subunit beta'' from Plasmodium falciparum (isolate 3D7).